The sequence spans 198 residues: MNRAADDLIASHLARSHAAMARAAQDTALLASAGRIAAKIVTALRSGRKLLIVGNGGSAADAQHIAAEIVGRYKQERPAFAAIALTTDTSALTAIGNDYGFDHVFARQVEGLGTSGDVLLAISTSGRSPSILNALRKARERGLTTIGFTGANGLAMGELCDELLVAPSDDTPLIQQIHLATAHGICETIEAALMQDLS.

Residues 40–198 (IVTALRSGRK…IEAALMQDLS (159 aa)) form the SIS domain. 55–57 (NGG) provides a ligand contact to substrate. Histidine 64 and glutamate 68 together coordinate Zn(2+). Residues glutamate 68, 97 to 98 (ND), 123 to 125 (STS), serine 128, and glutamine 175 contribute to the substrate site. The Zn(2+) site is built by glutamine 175 and histidine 183.

The protein belongs to the SIS family. GmhA subfamily. In terms of assembly, homotetramer. Zn(2+) is required as a cofactor.

The protein resides in the cytoplasm. The enzyme catalyses 2 D-sedoheptulose 7-phosphate = D-glycero-alpha-D-manno-heptose 7-phosphate + D-glycero-beta-D-manno-heptose 7-phosphate. The protein operates within carbohydrate biosynthesis; D-glycero-D-manno-heptose 7-phosphate biosynthesis; D-glycero-alpha-D-manno-heptose 7-phosphate and D-glycero-beta-D-manno-heptose 7-phosphate from sedoheptulose 7-phosphate: step 1/1. Catalyzes the isomerization of sedoheptulose 7-phosphate in D-glycero-D-manno-heptose 7-phosphate. The sequence is that of Phosphoheptose isomerase from Bradyrhizobium sp. (strain BTAi1 / ATCC BAA-1182).